Here is a 478-residue protein sequence, read N- to C-terminus: Protein nucleotidyltransferase YdiU (478 aa).

ATP is bound by residues Gly84, Gly86, Arg87, Lys107, Asp119, Gly120, Arg170, and Arg177. Catalysis depends on Asp246, which acts as the Proton acceptor. Residues Asn247 and Asp256 each contribute to the Mg(2+) site. An ATP-binding site is contributed by Asp256.

Belongs to the SELO family. Mg(2+) serves as cofactor. Mn(2+) is required as a cofactor.

The enzyme catalyses L-seryl-[protein] + ATP = 3-O-(5'-adenylyl)-L-seryl-[protein] + diphosphate. It carries out the reaction L-threonyl-[protein] + ATP = 3-O-(5'-adenylyl)-L-threonyl-[protein] + diphosphate. It catalyses the reaction L-tyrosyl-[protein] + ATP = O-(5'-adenylyl)-L-tyrosyl-[protein] + diphosphate. The catalysed reaction is L-histidyl-[protein] + UTP = N(tele)-(5'-uridylyl)-L-histidyl-[protein] + diphosphate. The enzyme catalyses L-seryl-[protein] + UTP = O-(5'-uridylyl)-L-seryl-[protein] + diphosphate. It carries out the reaction L-tyrosyl-[protein] + UTP = O-(5'-uridylyl)-L-tyrosyl-[protein] + diphosphate. In terms of biological role, nucleotidyltransferase involved in the post-translational modification of proteins. It can catalyze the addition of adenosine monophosphate (AMP) or uridine monophosphate (UMP) to a protein, resulting in modifications known as AMPylation and UMPylation. This chain is Protein nucleotidyltransferase YdiU, found in Escherichia coli O9:H4 (strain HS).